A 566-amino-acid chain; its full sequence is Viral IRF3-like protein (566 aa).

2 disordered regions span residues 151 to 170 and 176 to 236; these read PRPF…PAFC and QTGA…VHTD.

It belongs to the IRF family. As to quaternary structure, interacts with host SKP2. Interacts with host USP7.

Its function is as follows. Plays a role in the inhibition of host immune response. Interferes with the transactivating potential of cellular IRFs IRF3 and IRF7 that play a critical role in the induction of IFNA and IFNB genes. Additionally, interferes with surface major histocompatibility complex class II (MHC-II) antigen presentation. This chain is Viral IRF3-like protein (vIRF-3), found in Human herpesvirus 8 type P (isolate GK18) (HHV-8).